The chain runs to 62 residues: Large ribosomal subunit protein bL28 (62 aa).

It belongs to the bacterial ribosomal protein bL28 family.

In Caldicellulosiruptor bescii (strain ATCC BAA-1888 / DSM 6725 / KCTC 15123 / Z-1320) (Anaerocellum thermophilum), this protein is Large ribosomal subunit protein bL28.